Reading from the N-terminus, the 313-residue chain is MSDVPEDANAGCPGTGSAGAGKASGCAGCPNQGACATGQGPPPDADVPKIQDRFSRIKHKILILSGKGGVGKSTLTSNLARALASDPSKQVAILDVDICGPSQPRMMGVEDEEVHNSADGWTPVGIQPNLTLMSIAFLIGDKNDAVIWRGARKNGMIKQFLKDVDWGEVDYLLIDTPPGTSDEHISLVQFLLQAGPLDGALIVSTPQEVSLLDVRKEVSFCIKTKVPILGVVENMARFVCPNCAHTTLLFPTSTGGAEKMCEDSNLELLAQLPLEPALAEALDNGEDFFETNPDSTLAKSFMDLAEKVKAKLH.

A disordered region spans residues 1-25 (MSDVPEDANAGCPGTGSAGAGKASG). [4Fe-4S] cluster-binding residues include cysteine 12, cysteine 26, cysteine 29, and cysteine 35. 66 to 73 (GKGGVGKS) lines the ATP pocket. Residues cysteine 240 and cysteine 243 each contribute to the [4Fe-4S] cluster site.

This sequence belongs to the Mrp/NBP35 ATP-binding proteins family. NUBP1/NBP35 subfamily. In terms of assembly, heterotetramer of 2 NUBP1 and 2 NUBP2 chains. The cofactor is [4Fe-4S] cluster.

The protein resides in the cytoplasm. Its subcellular location is the cell projection. In terms of biological role, component of the cytosolic iron-sulfur (Fe/S) protein assembly (CIA) machinery. Required for maturation of extramitochondrial Fe-S proteins. The NUBP1-NUBP2 heterotetramer forms a Fe-S scaffold complex, mediating the de novo assembly of an Fe-S cluster and its transfer to target apoproteins. Regulates cilium formation and structure. This Caenorhabditis briggsae protein is Cytosolic Fe-S cluster assembly factor NUBP1 homolog.